A 50-amino-acid chain; its full sequence is Large ribosomal subunit protein bL33 (50 aa).

This sequence belongs to the bacterial ribosomal protein bL33 family.

The protein is Large ribosomal subunit protein bL33 of Fusobacterium nucleatum subsp. nucleatum (strain ATCC 25586 / DSM 15643 / BCRC 10681 / CIP 101130 / JCM 8532 / KCTC 2640 / LMG 13131 / VPI 4355).